The following is a 701-amino-acid chain: DNA ligase 2 (701 aa).

A compositionally biased stretch (polar residues) spans 1-10; sequence MSPAPQNRQP. The interval 1–21 is disordered; it reads MSPAPQNRQPSGVPVGGQFAA. NAD(+) contacts are provided by residues 64-68, 111-112, and Glu-133; these read DAEFD and SL. Lys-135 functions as the N6-AMP-lysine intermediate in the catalytic mechanism. NAD(+) contacts are provided by Arg-156, Glu-189, Lys-302, and Lys-326. Zn(2+)-binding residues include Cys-420, Cys-423, Cys-436, and Cys-441. Low complexity predominate over residues 603 to 613; sequence KAAPAAGAKAP. The tract at residues 603–623 is disordered; it reads KAAPAAGAKAPKLTKPDGKPM. In terms of domain architecture, BRCT spans 615–701; the sequence is LTKPDGKPMN…FAQMVEDGEV (87 aa).

The protein belongs to the NAD-dependent DNA ligase family. LigA subfamily. Requires Mg(2+) as cofactor. Mn(2+) serves as cofactor.

The catalysed reaction is NAD(+) + (deoxyribonucleotide)n-3'-hydroxyl + 5'-phospho-(deoxyribonucleotide)m = (deoxyribonucleotide)n+m + AMP + beta-nicotinamide D-nucleotide.. DNA ligase that catalyzes the formation of phosphodiester linkages between 5'-phosphoryl and 3'-hydroxyl groups in double-stranded DNA using NAD as a coenzyme and as the energy source for the reaction. It is essential for DNA replication and repair of damaged DNA. The polypeptide is DNA ligase 2 (Pseudarthrobacter chlorophenolicus (strain ATCC 700700 / DSM 12829 / CIP 107037 / JCM 12360 / KCTC 9906 / NCIMB 13794 / A6) (Arthrobacter chlorophenolicus)).